The primary structure comprises 229 residues: Probable coenzyme A transferase subunit alpha (229 aa).

Residue 26–32 (GGFGGVG) coordinates CoA.

Belongs to the 3-oxoacid CoA-transferase subunit A family. As to quaternary structure, heterodimer of a subunit alpha and a subunit beta.

This Bacillus subtilis (strain 168) protein is Probable coenzyme A transferase subunit alpha (yodS).